The following is a 317-amino-acid chain: Hydroxyacyl-CoA dehydrogenase ChsB1 (317 aa).

9 residues coordinate NAD(+): L32, D51, D82, I83, N108, S168, Y181, K185, and T215. Catalysis depends on residues S168, Y181, and K185.

Belongs to the short-chain dehydrogenases/reductases (SDR) family. Homodimer, with 1 active site on each face.

It carries out the reaction (22S)-hydroxy-3-oxo-chol-4-ene-24-oyl-CoA + NAD(+) = 3,22-dioxochol-4-en-24-oyl-CoA + NADH + H(+). Its pathway is steroid metabolism; cholesterol degradation. A reversible dehydrogenase involved in cholesterol side-chain degradation. Catalyzes the oxidation of hydroxyl-cholesterol-CoA ester metabolic intermediate (22S)-HOCO-CoA (3-oxo-chol-4-ene-(22S)-hydroxy-24-oyl-CoA), the product of ChsH3, has no activity on (22R)-HOCO-CoA (the product of EchA19). Also acts on (3R)-hydroxyoctanoyl-CoA and 17-beta-hydroxyandrost-4-en-3-one, but not on 7-alpha-hydroxyandrost-4-en-3-one, uses NAD(+) but not NADP(+). The chain is Hydroxyacyl-CoA dehydrogenase ChsB1 from Mycobacterium tuberculosis (strain ATCC 25618 / H37Rv).